We begin with the raw amino-acid sequence, 258 residues long: Short-chain dehydrogenase reductase 3c (258 aa).

12 to 36 (IITGGASGIGADAARLFTDHGAKVV) contacts NAD(+). Residue Ser144 coordinates substrate. Residue Tyr156 is the Proton acceptor of the active site.

The protein belongs to the short-chain dehydrogenases/reductases (SDR) family.

This is Short-chain dehydrogenase reductase 3c (SDR3c) from Arabidopsis thaliana (Mouse-ear cress).